The sequence spans 311 residues: Phospholipid phosphatase 3 (311 aa).

Residues 1–33 lie on the Cytoplasmic side of the membrane; sequence MQNYKYDKAIVAESKNGGSPALNNNPRKGGSKR. Serine 19 is modified (phosphoserine). Residues 34-54 form a helical membrane-spanning segment; that stretch reads VLLICLDLFCLFMAGLPFIII. The Extracellular portion of the chain corresponds to 55–85; sequence ETSTIKPYHRGFYCNDESIKYPQKTGETIND. A helical membrane pass occupies residues 86 to 106; that stretch reads AVLTAVGIVIAILAIITGEFY. At 107 to 123 the chain is on the cytoplasmic side; sequence RIYYLKEKSRSTIQNPY. The short motif at 109-110 is the Dityrosine basolateral targeting motif element; the sequence is YY. Residues 124-144 traverse the membrane as a helical segment; sequence VAALYKQVGCFLFGCAISQSF. Topologically, residues 145–194 are extracellular; the sequence is TDIAKVSIGRLRPHFLNVCNPDFSQINCSVGYIQNYRCRGEDSKVQEARK. Residues 149–157 form a phosphatase sequence motif I region; the sequence is KVSIGRLRP. A glycan (N-linked (GlcNAc...) asparagine) is linked at asparagine 171. The Integrin-binding motif motif lies at 183-185; the sequence is RGE. A helical membrane pass occupies residues 195–215; it reads SFFSGHASFSMYTMLYLVLYL. A phosphatase sequence motif II region spans residues 197 to 200; the sequence is FSGH. Histidine 200 (proton donors) is an active-site residue. The Cytoplasmic portion of the chain corresponds to 216–226; the sequence is QARFTWRGARL. Residues 227–244 form a helical membrane-spanning segment; sequence LRPLLQFTLIMMAFYTGL. Residues 245–256 form a phosphatase sequence motif III region; that stretch reads SRVSDHKHHPSD. The Extracellular portion of the chain corresponds to 245-258; the sequence is SRVSDHKHHPSDVL. The Nucleophile role is filled by histidine 252. The helical transmembrane segment at 259-279 threads the bilayer; the sequence is AGFAQGALVACCIVFFVSDLF. Residues 276–311 form a mediates interaction with CTNND1 region; it reads SDLFKTKTTLSLPPSAIRKDMLSPVDIDRSNHHNMV. The Cytoplasmic segment spans residues 280-311; it reads KTKTTLSLPPSAIRKDMLSPVDIDRSNHHNMV.

It belongs to the PA-phosphatase related phosphoesterase family. As to quaternary structure, forms functional homodimers and homooligomers that are not required for substrate recognition and catalytic activity. Can also form heterooligomers with other PLPP2 and PLPP3. Interacts with CTNND1; negatively regulates the PLPP3-mediated stabilization of beta-catenin/CTNNB1. Post-translationally, N-glycosylated. Contains high-mannose oligosaccharides.

The protein resides in the cell membrane. It localises to the basolateral cell membrane. It is found in the endoplasmic reticulum membrane. Its subcellular location is the endoplasmic reticulum-Golgi intermediate compartment membrane. The protein localises to the golgi apparatus membrane. The protein resides in the golgi apparatus. It localises to the trans-Golgi network membrane. It is found in the membrane raft. It carries out the reaction a 1,2-diacyl-sn-glycero-3-phosphate + H2O = a 1,2-diacyl-sn-glycerol + phosphate. The enzyme catalyses 1,2-dihexadecanoyl-sn-glycero-3-phosphate + H2O = 1,2-dihexadecanoyl-sn-glycerol + phosphate. It catalyses the reaction 1,2-di-(9Z-octadecenoyl)-sn-glycero-3-phosphate + H2O = 1,2-di-(9Z-octadecenoyl)-sn-glycerol + phosphate. The catalysed reaction is a monoacyl-sn-glycero-3-phosphate + H2O = a monoacylglycerol + phosphate. It carries out the reaction (9Z)-octadecenoyl-sn-glycero-3-phosphate + H2O = (9Z-octadecenoyl)-glycerol + phosphate. The enzyme catalyses sphing-4-enine 1-phosphate + H2O = sphing-4-enine + phosphate. It catalyses the reaction an N-acylsphing-4-enine 1-phosphate + H2O = an N-acylsphing-4-enine + phosphate. The catalysed reaction is N-(octanoyl)-sphing-4-enine-1-phosphate + H2O = N-octanoylsphing-4-enine + phosphate. It carries out the reaction N-(9Z-octadecenoyl)-ethanolamine phosphate + H2O = N-(9Z-octadecenoyl) ethanolamine + phosphate. It participates in lipid metabolism; phospholipid metabolism. Its activity is regulated as follows. Magnesium-independent phospholipid phosphatase. Insensitive to N-ethylmaleimide. Inhibited by sphingosine, zinc ions and modestly by propanolol. Functionally, magnesium-independent phospholipid phosphatase of the plasma membrane that catalyzes the dephosphorylation of a variety of glycerolipid and sphingolipid phosphate esters including phosphatidate/PA, lysophosphatidate/LPA, diacylglycerol pyrophosphate/DGPP, sphingosine 1-phosphate/S1P and ceramide 1-phosphate/C1P. Also acts on N-oleoyl ethanolamine phosphate/N-(9Z-octadecenoyl)-ethanolamine phosphate, a potential physiological compound. Has both an extracellular and an intracellular phosphatase activity, allowing the hydrolysis and the cellular uptake of these bioactive lipid mediators from the milieu, regulating signal transduction in different cellular processes. Through the dephosphorylation of extracellular sphingosine-1-phosphate and the regulation of its extra- and intracellular availability, plays a role in vascular homeostasis, regulating endothelial cell migration, adhesion, survival, proliferation and the production of pro-inflammatory cytokines. By maintaining the appropriate levels of this lipid in the cerebellum, also ensure its proper development and function. Through its intracellular lipid phosphatase activity may act in early compartments of the secretory pathway, regulating the formation of Golgi to endoplasmic reticulum retrograde transport carriers. Its function is as follows. Independently of this phosphatase activity may also function in the Wnt signaling pathway and the stabilization of beta-catenin/CTNNB1, thereby regulating cell proliferation, migration and differentiation in angiogenesis or yet in tumor growth. Also plays a role in integrin-mediated cell-cell adhesion in angiogenesis. This is Phospholipid phosphatase 3 from Bos taurus (Bovine).